We begin with the raw amino-acid sequence, 137 residues long: uncharacterized protein (137 aa).

The next 3 helical transmembrane spans lie at 5–25, 79–99, and 109–129; these read ELLW…VLVI, IAAI…WGYY, and FALG…SILW.

The protein belongs to the MAPEG family.

It is found in the cell membrane. This is an uncharacterized protein from Synechocystis sp. (strain ATCC 27184 / PCC 6803 / Kazusa).